The sequence spans 215 residues: Ras-related protein Rab-5A (215 aa).

Positions 29, 30, 32, 33, 34, 35, 46, 47, 52, and 78 each coordinate GTP. Mg(2+) is bound at residue S34. 2 consecutive short sequence motifs (switch) follow at residues 44 to 56 (QFHE…IGAA) and 77 to 93 (AGQE…YRGA). T52 serves as a coordination point for Mg(2+). A Phosphoserine modification is found at S84. Residues N133, K134, D136, A164, and K165 each contribute to the GTP site. A disordered region spans residues 181–215 (LPKNEPQNPGANSARGRGVDLTEPTQPTRSQCCSN). Over residues 203–215 (EPTQPTRSQCCSN) the composition is skewed to polar residues. Residues C212 and C213 are each lipidated (S-geranylgeranyl cysteine).

The protein belongs to the small GTPase superfamily. Rab family. Interacts with GDI1; this promotes dissociation from membranes; phosphorylation at Ser-84 disrupts this interaction. Interacts with GDI2; phosphorylation at Ser-84 disrupts the interaction. Binds EEA1. Interacts with ALS2CL, SUN2, ZFYVE20 and RUFY1. Interacts with RIN1 and GAPVD1, which regulate its pathway, probably by acting as a GEF. Interacts with SGSM1 and SGSM3. Interacts with PIK3CB. Interacts with RABEP1 and RINL. Interacts with OCRL and INPP5F. May be a component of a complex composed of RAB5A, DYN2 and PIK3C3. Does not interact with the BLOC-3 complex (heterodimer of HPS1 and HPS4). Interacts with CLN5. Interacts with APPL2. Interacts with F8A1/F8A2/F8A3. Found in a complex with F8A1/F8A2/F8A3, HTT and RAB5A; mediates the recruitment of HTT by RAB5A onto early endosomes. Interacts with ATP9A. Interacts with PPP1R21; mediates the recruitment of FERRY complex by RAB5A onto early endosomes. Mg(2+) is required as a cofactor. Post-translationally, phosphorylation of Ser-84 in the switch II region by LRRK2 prevents the association of RAB regulatory proteins, including RAB GDP dissociation inhibitors GDI1 and GDI2.

It is found in the cell membrane. The protein resides in the early endosome membrane. It localises to the melanosome. The protein localises to the cytoplasmic vesicle. Its subcellular location is the cell projection. It is found in the ruffle. The protein resides in the cytoplasm. It localises to the cytosol. The protein localises to the membrane. Its subcellular location is the phagosome membrane. It is found in the endosome membrane. The enzyme catalyses GTP + H2O = GDP + phosphate + H(+). Regulated by guanine nucleotide exchange factors (GEFs) including RINL, which promote the exchange of bound GDP for free GTP. Regulated by GTPase activating proteins (GAPs) which increase the GTP hydrolysis activity. Inhibited by GDP dissociation inhibitors (GDIs). Its function is as follows. The small GTPases Rab are key regulators of intracellular membrane trafficking, from the formation of transport vesicles to their fusion with membranes. Rabs cycle between an inactive GDP-bound form and an active GTP-bound form that is able to recruit to membranes different sets of downstream effectors directly responsible for vesicle formation, movement, tethering and fusion. RAB5A is required for the fusion of plasma membranes and early endosomes. Contributes to the regulation of filopodia extension. Required for the exosomal release of SDCBP, CD63, PDCD6IP and syndecan. Regulates maturation of apoptotic cell-containing phagosomes, probably downstream of DYN2 and PIK3C3. This Canis lupus familiaris (Dog) protein is Ras-related protein Rab-5A (RAB5A).